The primary structure comprises 426 residues: Cytochrome c biogenesis protein CcsB (426 aa).

Helical transmembrane passes span 11-31, 69-89, and 159-179; these read LRVAIVLLFLIALASAVGTAI, SVWFLSLLAWLGLALILCSWR, and VGPLLVHTGLILLMLGAVWGV.

Belongs to the Ccs1/CcsB family. May interact with CcsA.

It is found in the cellular thylakoid membrane. Its function is as follows. Required during biogenesis of c-type cytochromes (cytochrome c6 and cytochrome f) at the step of heme attachment. The chain is Cytochrome c biogenesis protein CcsB from Synechococcus sp. (strain CC9902).